The chain runs to 623 residues: Kelch-like protein diablo (623 aa).

The interval 1–54 is disordered; the sequence is MGDLPGSGSTAQPRDAAVTGTGGNSTAGGGSSVGSTAVDRPPSPARLSHTSEKH. Threonine 19 is modified (phosphothreonine). Residues 20 to 32 show a composition bias toward gly residues; the sequence is GTGGNSTAGGGSS. Residues 72–139 enclose the BTB domain; that stretch reads CDVVLNVGGR…CYTAHIIVEE (68 aa). In terms of domain architecture, BACK spans 174 to 276; that stretch reads CLGIRAFADT…SPKFLVGTVG (103 aa). Kelch repeat units follow at residues 323–369, 371–417, 418–464, 466–511, 513–558, and 559–605; these read VLFA…VLND, LYAV…VLDE, FLYA…VLGG, LYAI…VFNN, IYAV…VVNG, and QLYA…VMRA.

It participates in protein modification; protein ubiquitination. Probable substrate-specific adapter of an E3 ubiquitin-protein ligase complex which mediates the ubiquitination and subsequent proteasomal degradation of target proteins. May have a role in synapse differentiation and growth. The protein is Kelch-like protein diablo of Drosophila simulans (Fruit fly).